Reading from the N-terminus, the 99-residue chain is NADH-quinone oxidoreductase subunit K (99 aa).

3 helical membrane-spanning segments follow: residues 3–23, 28–48, and 59–79; these read PDNYLYLSALLFTIGAAGVLL, IVMFMCIELMLNAANLAFVTF, and VVAFFTMVVAACEVVIGLAII.

It belongs to the complex I subunit 4L family. As to quaternary structure, NDH-1 is composed of 14 different subunits. Subunits NuoA, H, J, K, L, M, N constitute the membrane sector of the complex.

The protein localises to the cell membrane. The enzyme catalyses a quinone + NADH + 5 H(+)(in) = a quinol + NAD(+) + 4 H(+)(out). NDH-1 shuttles electrons from NADH, via FMN and iron-sulfur (Fe-S) centers, to quinones in the respiratory chain. The immediate electron acceptor for the enzyme in this species is believed to be a menaquinone. Couples the redox reaction to proton translocation (for every two electrons transferred, four hydrogen ions are translocated across the cytoplasmic membrane), and thus conserves the redox energy in a proton gradient. The chain is NADH-quinone oxidoreductase subunit K from Mycolicibacterium vanbaalenii (strain DSM 7251 / JCM 13017 / BCRC 16820 / KCTC 9966 / NRRL B-24157 / PYR-1) (Mycobacterium vanbaalenii).